The sequence spans 111 residues: UPF0122 protein LACR_1522 (111 aa).

It belongs to the UPF0122 family.

In terms of biological role, might take part in the signal recognition particle (SRP) pathway. This is inferred from the conservation of its genetic proximity to ftsY/ffh. May be a regulatory protein. This is UPF0122 protein LACR_1522 from Lactococcus lactis subsp. cremoris (strain SK11).